The following is a 339-amino-acid chain: ATPase GET3 (339 aa).

34-41 provides a ligand contact to ATP; sequence KGGVGKTT. Residue aspartate 63 is part of the active site. Residues glutamate 243 and asparagine 270 each coordinate ATP. 2 residues coordinate Zn(2+): cysteine 281 and cysteine 284.

It belongs to the arsA ATPase family. As to quaternary structure, homodimer.

The protein resides in the cytoplasm. The protein localises to the endoplasmic reticulum. Its function is as follows. ATPase required for the post-translational delivery of tail-anchored (TA) proteins to the endoplasmic reticulum. Recognizes and selectively binds the transmembrane domain of TA proteins in the cytosol. This complex then targets to the endoplasmic reticulum by membrane-bound receptors, where the tail-anchored protein is released for insertion. This process is regulated by ATP binding and hydrolysis. ATP binding drives the homodimer towards the closed dimer state, facilitating recognition of newly synthesized TA membrane proteins. ATP hydrolysis is required for insertion. Subsequently, the homodimer reverts towards the open dimer state, lowering its affinity for the membrane-bound receptor, and returning it to the cytosol to initiate a new round of targeting. The protein is ATPase GET3 of Coccidioides immitis (strain RS) (Valley fever fungus).